A 124-amino-acid chain; its full sequence is Ribonuclease pancreatic (124 aa).

The span at 1-13 shows a compositional bias: basic and acidic residues; it reads KETAAAKFERQHM. Residues 1-25 are disordered; the sequence is KETAAAKFERQHMDSSTSSASSSNY. The substrate site is built by lysine 7 and arginine 10. Catalysis depends on histidine 12, which acts as the Proton acceptor. 4 disulfide bridges follow: cysteine 26/cysteine 84, cysteine 40/cysteine 95, cysteine 58/cysteine 110, and cysteine 65/cysteine 72. Substrate-binding positions include 41–45, lysine 66, and arginine 85; that span reads KPVNT. Catalysis depends on histidine 119, which acts as the Proton donor.

Belongs to the pancreatic ribonuclease family. Monomer. Interacts with and forms tight 1:1 complexes with RNH1. Dimerization of two such complexes may occur. Interaction with RNH1 inhibits this protein. Pancreas.

The protein localises to the secreted. The enzyme catalyses an [RNA] containing cytidine + H2O = an [RNA]-3'-cytidine-3'-phosphate + a 5'-hydroxy-ribonucleotide-3'-[RNA].. The catalysed reaction is an [RNA] containing uridine + H2O = an [RNA]-3'-uridine-3'-phosphate + a 5'-hydroxy-ribonucleotide-3'-[RNA].. In terms of biological role, endonuclease that catalyzes the cleavage of RNA on the 3' side of pyrimidine nucleotides. Acts on single-stranded and double-stranded RNA. This chain is Ribonuclease pancreatic (RNASE1), found in Tragelaphus oryx (Eland).